The chain runs to 260 residues: 5'-nucleotidase SurE (260 aa).

4 residues coordinate a divalent metal cation: Asp13, Asp14, Ser44, and Asn102.

It belongs to the SurE nucleotidase family. Requires a divalent metal cation as cofactor.

The protein resides in the cytoplasm. It carries out the reaction a ribonucleoside 5'-phosphate + H2O = a ribonucleoside + phosphate. Nucleotidase that shows phosphatase activity on nucleoside 5'-monophosphates. In Christiangramia forsetii (strain DSM 17595 / CGMCC 1.15422 / KT0803) (Gramella forsetii), this protein is 5'-nucleotidase SurE.